A 645-amino-acid chain; its full sequence is 1-deoxy-D-xylulose-5-phosphate synthase 2 (645 aa).

Residues His-79 and 120–122 (GHS) each bind thiamine diphosphate. Asp-151 provides a ligand contact to Mg(2+). Thiamine diphosphate is bound by residues 152 to 153 (GS), Asn-180, Tyr-291, and Glu-373. Asn-180 contacts Mg(2+).

It belongs to the transketolase family. DXPS subfamily. Homodimer. Mg(2+) is required as a cofactor. Requires thiamine diphosphate as cofactor.

It carries out the reaction D-glyceraldehyde 3-phosphate + pyruvate + H(+) = 1-deoxy-D-xylulose 5-phosphate + CO2. It functions in the pathway metabolic intermediate biosynthesis; 1-deoxy-D-xylulose 5-phosphate biosynthesis; 1-deoxy-D-xylulose 5-phosphate from D-glyceraldehyde 3-phosphate and pyruvate: step 1/1. Functionally, catalyzes the acyloin condensation reaction between C atoms 2 and 3 of pyruvate and glyceraldehyde 3-phosphate to yield 1-deoxy-D-xylulose-5-phosphate (DXP). This chain is 1-deoxy-D-xylulose-5-phosphate synthase 2, found in Rhodospirillum rubrum (strain ATCC 11170 / ATH 1.1.1 / DSM 467 / LMG 4362 / NCIMB 8255 / S1).